The primary structure comprises 1134 residues: Isoleucine--tRNA ligase (1134 aa).

Positions 52-62 match the 'HIGH' region motif; the sequence is PFANGLPHYGH. The 'KMSKS' region motif lies at 656-660; sequence KLSKR. Residue lysine 659 participates in ATP binding.

Belongs to the class-I aminoacyl-tRNA synthetase family. IleS type 2 subfamily. Monomer. It depends on Zn(2+) as a cofactor.

It is found in the cytoplasm. The enzyme catalyses tRNA(Ile) + L-isoleucine + ATP = L-isoleucyl-tRNA(Ile) + AMP + diphosphate. Catalyzes the attachment of isoleucine to tRNA(Ile). As IleRS can inadvertently accommodate and process structurally similar amino acids such as valine, to avoid such errors it has two additional distinct tRNA(Ile)-dependent editing activities. One activity is designated as 'pretransfer' editing and involves the hydrolysis of activated Val-AMP. The other activity is designated 'posttransfer' editing and involves deacylation of mischarged Val-tRNA(Ile). In Wolbachia sp. subsp. Brugia malayi (strain TRS), this protein is Isoleucine--tRNA ligase.